The chain runs to 430 residues: Glutamyl-tRNA reductase (430 aa).

Substrate contacts are provided by residues 50 to 53 (TCNR), S108, 113 to 115 (EPQ), and Q119. C51 (nucleophile) is an active-site residue. NADP(+) is bound at residue 188-193 (GAGEMA).

The protein belongs to the glutamyl-tRNA reductase family. Homodimer.

It catalyses the reaction (S)-4-amino-5-oxopentanoate + tRNA(Glu) + NADP(+) = L-glutamyl-tRNA(Glu) + NADPH + H(+). The protein operates within porphyrin-containing compound metabolism; protoporphyrin-IX biosynthesis; 5-aminolevulinate from L-glutamyl-tRNA(Glu): step 1/2. Functionally, catalyzes the NADPH-dependent reduction of glutamyl-tRNA(Glu) to glutamate 1-semialdehyde (GSA). This Lawsonia intracellularis (strain PHE/MN1-00) protein is Glutamyl-tRNA reductase.